The primary structure comprises 55 residues: MAKGVREKIKLVSSAGTHHFYTTTKNKRLKLEKLELKKFDPVVRKHVIYKEAKIK.

The protein belongs to the bacterial ribosomal protein bL33 family.

The polypeptide is Large ribosomal subunit protein bL33 (Baumannia cicadellinicola subsp. Homalodisca coagulata).